Here is an 822-residue protein sequence, read N- to C-terminus: AP-1 complex subunit gamma-1 (822 aa).

The interval 597 to 628 is disordered; the sequence is EIVQTNGETEPAPLETKPPPSGPQPTSQANDL. The region spanning 702–817 is the GAE domain; the sequence is AGIPSITAYS…QDLAEVNNFP (116 aa).

This sequence belongs to the adaptor complexes large subunit family. Adaptor protein complex 1 (AP-1) is a heterotetramer composed of two large adaptins (gamma-type subunit AP1G1 and beta-type subunit AP1B1), a medium adaptin (mu-type subunit AP1M1 or AP1M2) and a small adaptin (sigma-type subunit AP1S1 or AP1S2 or AP1S3). Interacts (via GAE domain) with RABEP1. Interacts with SYNRG/gamma-synergin. Interacts with EPS15. Interacts (via GAE domain) with AP1AR (via coiled-coil domain). Interacts with CLN3 (via dileucine motif); this interaction facilitates lysosomal targeting. Interacts (via GAE domain) with AFTPH/aftiphilin; the interaction is required to recruit AFTPH/aftiphilin to the perinuclear region of the cell. In terms of tissue distribution, widely expressed.

Its subcellular location is the golgi apparatus. It is found in the cytoplasmic vesicle. The protein localises to the clathrin-coated vesicle membrane. The protein resides in the cytoplasm. It localises to the perinuclear region. Its subcellular location is the clathrin-coated vesicle. It is found in the membrane. The protein localises to the clathrin-coated pit. Functionally, subunit of clathrin-associated adaptor protein complex 1 that plays a role in protein sorting in the late-Golgi/trans-Golgi network (TGN) and/or endosomes. The AP complexes mediate both the recruitment of clathrin to membranes and the recognition of sorting signals within the cytosolic tails of transmembrane cargo molecules. In association with AFTPH/aftiphilin in the aftiphilin/p200/gamma-synergin complex, involved in the trafficking of transferrin from early to recycling endosomes, and the membrane trafficking of furin and the lysosomal enzyme cathepsin D between the trans-Golgi network (TGN) and endosomes. The sequence is that of AP-1 complex subunit gamma-1 (AP1G1) from Homo sapiens (Human).